The following is a 243-amino-acid chain: Hydroxyacylglutathione hydrolase (243 aa).

Residues histidine 59, histidine 61, aspartate 63, histidine 64, histidine 117, aspartate 135, and histidine 173 each contribute to the Zn(2+) site.

Belongs to the metallo-beta-lactamase superfamily. Glyoxalase II family. Monomer. Zn(2+) serves as cofactor.

The catalysed reaction is an S-(2-hydroxyacyl)glutathione + H2O = a 2-hydroxy carboxylate + glutathione + H(+). The protein operates within secondary metabolite metabolism; methylglyoxal degradation; (R)-lactate from methylglyoxal: step 2/2. Its function is as follows. Thiolesterase that catalyzes the hydrolysis of S-D-lactoyl-glutathione to form glutathione and D-lactic acid. This chain is Hydroxyacylglutathione hydrolase, found in Acidiphilium cryptum (strain JF-5).